Reading from the N-terminus, the 548-residue chain is (2S)-methylsuccinyl-CoA dehydrogenase (548 aa).

Residues 282-291 and 315-317 each bind FAD; these read AVFTEPNTGS and WIT. Ser291 is a substrate binding site. 409–412 lines the substrate pocket; that stretch reads ESAR. Residues Arg437 and 505–509 contribute to the FAD site; that span reads QIHGG. Residue Glu532 is the Proton acceptor of the active site. 534–536 lines the FAD pocket; it reads AAE.

It belongs to the acyl-CoA dehydrogenase family. In terms of assembly, homodimer. FAD serves as cofactor.

The enzyme catalyses (2S)-methylsuccinyl-CoA + oxidized [electron-transfer flavoprotein] + H(+) = 2-methylfumaryl-CoA + reduced [electron-transfer flavoprotein]. Involved in the ethylmalonyl-CoA pathway, a new acetyl-CoA assimilation strategy that operates in a number of bacteria and replaces the glyoxylate cycle. Catalyzes the oxidation of (2S)-methylsuccinyl-CoA to yield mesaconyl-(C1)-CoA. Highly specific for (S)-methylsuccinyl-CoA. The polypeptide is (2S)-methylsuccinyl-CoA dehydrogenase (Cereibacter sphaeroides (Rhodobacter sphaeroides)).